The sequence spans 80 residues: Pigment-dispersing hormone peptides (80 aa).

A signal peptide spans Met-1–Ser-20. Positions Val-21–Pro-58 are excised as a propeptide. Residue Ala-78 is modified to Alanine amide.

It belongs to the arthropod PDH family. Expressed in the brain (at protein level).

The protein resides in the secreted. Its function is as follows. Neuropeptide PDF is the main transmitter regulating circadian locomotor rhythms. This is Pigment-dispersing hormone peptides from Camponotus floridanus (Florida carpenter ant).